The sequence spans 215 residues: Probable transaldolase (215 aa).

The active-site Schiff-base intermediate with substrate is K83.

This sequence belongs to the transaldolase family. Type 3B subfamily.

The protein resides in the cytoplasm. It catalyses the reaction D-sedoheptulose 7-phosphate + D-glyceraldehyde 3-phosphate = D-erythrose 4-phosphate + beta-D-fructose 6-phosphate. Its pathway is carbohydrate degradation; pentose phosphate pathway; D-glyceraldehyde 3-phosphate and beta-D-fructose 6-phosphate from D-ribose 5-phosphate and D-xylulose 5-phosphate (non-oxidative stage): step 2/3. Transaldolase is important for the balance of metabolites in the pentose-phosphate pathway. The chain is Probable transaldolase from Methanococcus maripaludis (strain C7 / ATCC BAA-1331).